A 130-amino-acid chain; its full sequence is Small ribosomal subunit protein uS9 (130 aa).

Belongs to the universal ribosomal protein uS9 family.

In Agathobacter rectalis (strain ATCC 33656 / DSM 3377 / JCM 17463 / KCTC 5835 / VPI 0990) (Eubacterium rectale), this protein is Small ribosomal subunit protein uS9.